The chain runs to 301 residues: Acetyl-coenzyme A carboxylase carboxyl transferase subunit beta (301 aa).

The region spanning 23–292 (VWTKCDSCGQ…PSPDEPRESV (270 aa)) is the CoA carboxyltransferase N-terminal domain. Cys27, Cys30, Cys46, and Cys49 together coordinate Zn(2+). The C4-type zinc-finger motif lies at 27 to 49 (CDSCGQVLYRAELERNLEVCPKC). The tract at residues 280–301 (LPAPSPDEPRESVVVPDQEPEA) is disordered.

The protein belongs to the AccD/PCCB family. Acetyl-CoA carboxylase is a heterohexamer composed of biotin carboxyl carrier protein (AccB), biotin carboxylase (AccC) and two subunits each of ACCase subunit alpha (AccA) and ACCase subunit beta (AccD). Zn(2+) serves as cofactor.

The protein localises to the cytoplasm. The enzyme catalyses N(6)-carboxybiotinyl-L-lysyl-[protein] + acetyl-CoA = N(6)-biotinyl-L-lysyl-[protein] + malonyl-CoA. The protein operates within lipid metabolism; malonyl-CoA biosynthesis; malonyl-CoA from acetyl-CoA: step 1/1. Functionally, component of the acetyl coenzyme A carboxylase (ACC) complex. Biotin carboxylase (BC) catalyzes the carboxylation of biotin on its carrier protein (BCCP) and then the CO(2) group is transferred by the transcarboxylase to acetyl-CoA to form malonyl-CoA. This is Acetyl-coenzyme A carboxylase carboxyl transferase subunit beta from Enterobacter sp. (strain 638).